A 206-amino-acid polypeptide reads, in one-letter code: High frequency lysogenization protein HflD homolog (206 aa).

The protein belongs to the HflD family.

The protein localises to the cytoplasm. It localises to the cell inner membrane. This chain is High frequency lysogenization protein HflD homolog, found in Pseudomonas syringae pv. syringae (strain B728a).